The sequence spans 157 residues: Selenoprotein F (157 aa).

A signal peptide spans 1–19 (MSGEVYILWLLSLIQTLSA). A non-standard amino acid (selenocysteine) is located at residue Sec-84.

The protein belongs to the selenoprotein M/F family. Expressed in the brain, liver and retina. Localized to the retinal ganglion cell layer, the inner nuclear layer and the outer nuclear layer at both parr and smolt stages.

The protein localises to the endoplasmic reticulum lumen. In terms of biological role, may be involved in redox reactions associated with the formation of disulfide bonds. May contribute to the quality control of protein folding in the endoplasmic reticulum. May be involved in retinal development. In Oncorhynchus mykiss (Rainbow trout), this protein is Selenoprotein F.